The sequence spans 515 residues: Maturase K (515 aa).

This sequence belongs to the intron maturase 2 family. MatK subfamily.

It localises to the plastid. The protein localises to the chloroplast. Usually encoded in the trnK tRNA gene intron. Probably assists in splicing its own and other chloroplast group II introns. The sequence is that of Maturase K from Pinus contorta (Shore pine).